A 358-amino-acid polypeptide reads, in one-letter code: Type II methyltransferase M.HpaII (358 aa).

One can recognise an SAM-dependent MTase C5-type domain in the interval Phe-32–Leu-356. The active site involves Cys-103.

Belongs to the class I-like SAM-binding methyltransferase superfamily. C5-methyltransferase family. As to quaternary structure, monomer.

It carries out the reaction a 2'-deoxycytidine in DNA + S-adenosyl-L-methionine = a 5-methyl-2'-deoxycytidine in DNA + S-adenosyl-L-homocysteine + H(+). In terms of biological role, a methylase that recognizes the double-stranded sequence 5'-CCGG-3', methylates C-2 on both strands, and protects the DNA from cleavage by the HpaII endonuclease. The sequence is that of Type II methyltransferase M.HpaII from Haemophilus parainfluenzae.